The following is a 464-amino-acid chain: UDP-N-acetylmuramoylalanine--D-glutamate ligase (464 aa).

112-118 lines the ATP pocket; it reads GTDGKTT.

This sequence belongs to the MurCDEF family.

It localises to the cytoplasm. It carries out the reaction UDP-N-acetyl-alpha-D-muramoyl-L-alanine + D-glutamate + ATP = UDP-N-acetyl-alpha-D-muramoyl-L-alanyl-D-glutamate + ADP + phosphate + H(+). The protein operates within cell wall biogenesis; peptidoglycan biosynthesis. Cell wall formation. Catalyzes the addition of glutamate to the nucleotide precursor UDP-N-acetylmuramoyl-L-alanine (UMA). The polypeptide is UDP-N-acetylmuramoylalanine--D-glutamate ligase (Chlorobium phaeobacteroides (strain DSM 266 / SMG 266 / 2430)).